We begin with the raw amino-acid sequence, 290 residues long: N-acetylmannosamine kinase (290 aa).

ATP is bound by residues 6 to 13 and 132 to 139; these read ALDIGGTK and GVGGGIIL. Residues His-156, Cys-166, Cys-168, and Cys-173 each contribute to the Zn(2+) site.

The protein belongs to the ROK (NagC/XylR) family. NanK subfamily. Homodimer.

It carries out the reaction an N-acyl-D-mannosamine + ATP = an N-acyl-D-mannosamine 6-phosphate + ADP + H(+). Its pathway is amino-sugar metabolism; N-acetylneuraminate degradation; D-fructose 6-phosphate from N-acetylneuraminate: step 2/5. Functionally, catalyzes the phosphorylation of N-acetylmannosamine (ManNAc) to ManNAc-6-P. This is N-acetylmannosamine kinase from Yersinia pseudotuberculosis serotype O:3 (strain YPIII).